A 434-amino-acid polypeptide reads, in one-letter code: Ribulose bisphosphate carboxylase-like protein (434 aa).

Residues lysine 198, aspartate 200, and glutamate 201 each coordinate Mg(2+). Lysine 198 carries the post-translational modification N6-carboxylysine.

It belongs to the RuBisCO large chain family. Type IV subfamily. Homodimer. Mg(2+) is required as a cofactor.

May be involved in sulfur metabolism and oxidative stress response. Does not show RuBisCO activity. In Chlorobaculum thiosulfatiphilum (Chlorobium limicola f.sp. thiosulfatophilum), this protein is Ribulose bisphosphate carboxylase-like protein.